Consider the following 251-residue polypeptide: uncharacterized protein (251 aa).

Residues His5, His7, Glu101, His132, His163, and Asp209 each coordinate a divalent metal cation.

This sequence belongs to the metallo-dependent hydrolases superfamily. TatD-type hydrolase family. It depends on a divalent metal cation as a cofactor.

This is an uncharacterized protein from Methanocaldococcus jannaschii (strain ATCC 43067 / DSM 2661 / JAL-1 / JCM 10045 / NBRC 100440) (Methanococcus jannaschii).